A 137-amino-acid polypeptide reads, in one-letter code: Chaperone protein YscB (137 aa).

As to quaternary structure, interacts with SycN to form a complex which specifically binds to YopN.

It is found in the cytoplasm. It localises to the cell inner membrane. In terms of biological role, functions as a specific chaperone for YopN. It could facilitate the secretion and the subsequent translocation of YopN. In Yersinia pestis, this protein is Chaperone protein YscB (yscB).